A 297-amino-acid polypeptide reads, in one-letter code: Retroviral cyclin (297 aa).

A Cyclin N-terminal domain is found at 21–113 (PVYWKELLNW…KPSLLLTETM (93 aa)). Residues 21 to 113 (PVYWKELLNW…KPSLLLTETM (93 aa)) form a transcription activation domain region. The stretch at 222 to 270 (QINLDFAEAEQREAAERRALLEREREQQLQEARERLDDVMAVLEAEVAI) forms a coiled coil.

It belongs to the cyclin family. Interacts (via transcription activation domain) with host TAF9 in vitro. Interacts with host CDK3 and CDK8.

The protein localises to the host nucleus. Its function is as follows. Transforming protein which induces the development of dermal sarcomas. Induces positive and negative regulation of transcription from host and viral promoters by interacting with various cellular factors involved in protein transcription regulation. This is Retroviral cyclin (orfA) from Sander vitreus (Walleye).